Here is a 175-residue protein sequence, read N- to C-terminus: uncharacterized protein (175 aa).

Over residues 1-10 (MSKKINNNKT) the composition is skewed to polar residues. Residues 1 to 21 (MSKKINNNKTPRNKVKNNNVS) form a disordered region.

This is an uncharacterized protein from Ureaplasma parvum serovar 3 (strain ATCC 700970).